Consider the following 225-residue polypeptide: Transcriptional regulatory protein AfsQ1 (225 aa).

Residues 3–116 form the Response regulatory domain; the sequence is SLLLIEDDDA…VLDARIRAVL (114 aa). Residue Asp-52 is modified to 4-aspartylphosphate. Residues 124-223 constitute a DNA-binding region (ompR/PhoB-type); sequence TDSASFGSLV…VRGVGYRLDP (100 aa).

Post-translationally, phosphorylated by AfsQ2.

It is found in the cytoplasm. The protein localises to the nucleoid. Its function is as follows. Forms part of a two-component regulatory system AfsQ1/AfsQ2 involved in secondary metabolism. In Streptomyces coelicolor (strain ATCC BAA-471 / A3(2) / M145), this protein is Transcriptional regulatory protein AfsQ1.